A 361-amino-acid chain; its full sequence is 1-deoxy-D-xylulose 5-phosphate reductoisomerase (361 aa).

6 residues coordinate NADPH: Thr-12, Gly-13, Ser-14, Ile-15, Gly-38, and Asn-102. Lys-103 contributes to the 1-deoxy-D-xylulose 5-phosphate binding site. Glu-104 is a binding site for NADPH. Asp-126 contributes to the Mn(2+) binding site. Residues Ser-127, Glu-128, Ser-152, and His-175 each contribute to the 1-deoxy-D-xylulose 5-phosphate site. Glu-128 provides a ligand contact to Mn(2+). Gly-181 contributes to the NADPH binding site. 1-deoxy-D-xylulose 5-phosphate contacts are provided by Ser-188, Asn-193, Lys-194, and Glu-197. Glu-197 provides a ligand contact to Mn(2+).

Belongs to the DXR family. Mg(2+) is required as a cofactor. It depends on Mn(2+) as a cofactor.

The catalysed reaction is 2-C-methyl-D-erythritol 4-phosphate + NADP(+) = 1-deoxy-D-xylulose 5-phosphate + NADPH + H(+). It participates in isoprenoid biosynthesis; isopentenyl diphosphate biosynthesis via DXP pathway; isopentenyl diphosphate from 1-deoxy-D-xylulose 5-phosphate: step 1/6. Functionally, catalyzes the NADPH-dependent rearrangement and reduction of 1-deoxy-D-xylulose-5-phosphate (DXP) to 2-C-methyl-D-erythritol 4-phosphate (MEP). In Leifsonia xyli subsp. xyli (strain CTCB07), this protein is 1-deoxy-D-xylulose 5-phosphate reductoisomerase.